The primary structure comprises 182 residues: D-lyxose ketol-isomerase (182 aa).

Positions 74, 76, 87, and 142 each coordinate Mn(2+).

The protein belongs to the D-lyxose ketol-isomerase family. In terms of assembly, homodimer. It depends on Mn(2+) as a cofactor.

The catalysed reaction is D-lyxose = D-xylulose. Sugar isomerase that catalyzes the reversible isomerization of D-lyxose to D-xylulose. Shows weak activity with D-mannose and L-ribose. The polypeptide is D-lyxose ketol-isomerase (Cohnella laeviribosi).